We begin with the raw amino-acid sequence, 305 residues long: GTP cyclohydrolase FolE2 (305 aa).

The protein belongs to the GTP cyclohydrolase IV family.

The enzyme catalyses GTP + H2O = 7,8-dihydroneopterin 3'-triphosphate + formate + H(+). Its pathway is cofactor biosynthesis; 7,8-dihydroneopterin triphosphate biosynthesis; 7,8-dihydroneopterin triphosphate from GTP: step 1/1. Functionally, converts GTP to 7,8-dihydroneopterin triphosphate. This Xanthomonas euvesicatoria pv. vesicatoria (strain 85-10) (Xanthomonas campestris pv. vesicatoria) protein is GTP cyclohydrolase FolE2.